A 158-amino-acid polypeptide reads, in one-letter code: MGVFTYENDTTSTVPPAKLFKAVVHDADLIVPKVVDSIKTVEILEGNGGPGTVKKLTFVEGGQTLYVLHKVEAIDDAKFEYNYSIVGGVGISDIVEKISFEAKLFEGPNGGSVGKMIVKYHTKGDAKPIEKEVEEGKAKGDALFKAIEAYVLANPNYN.

It belongs to the BetVI family.

This chain is ABA-responsive protein ABR18, found in Pisum sativum (Garden pea).